Consider the following 224-residue polypeptide: BOS complex subunit TMEM147 (224 aa).

The helical transmembrane segment at 1–21 (MTLFHFGNCFALAYFPYFITY) threads the bilayer. The Cytoplasmic segment spans residues 22 to 34 (KCSGLSEYNAFWK). The helical transmembrane segment at 35-58 (CVQAGVTYLFVQLCKMLFLATFFP) threads the bilayer. Over 59–66 (TWEGGIYD) the chain is Lumenal. Residues 67–88 (FIGEFMKASVDVADLIGLNLVM) form a helical membrane-spanning segment. Over 89–98 (SRNAGKGEYK) the chain is Cytoplasmic. The helical transmembrane segment at 99–124 (IMVAALGWATAELIMSRCIPLWVGAR) threads the bilayer. Residues 125–129 (GIEFD) are Lumenal-facing. Residues 130-155 (WKYIQMSIDSNISLVHYIVASAQVWM) form a helical membrane-spanning segment. Residues 156–164 (ITRYDLYHT) lie on the Cytoplasmic side of the membrane. Residues 165 to 187 (FRPAVLLLMFLSVYKAFVMETFV) form a helical membrane-spanning segment. Over 188-194 (HLCSLGS) the chain is Lumenal. A helical membrane pass occupies residues 195–216 (WAALLARAVVTGLLALSTLALY). The Cytoplasmic segment spans residues 217 to 224 (VAVVNVHS).

The protein belongs to the TMEM147 family. As to quaternary structure, component of the back of Sec61 (BOS) complex, composed of NCLN/Nicalin, NOMO (NOMO1, NOMO2 or NOMO3) and TMEM147. The BOS complex is part of the multi-pass translocon (MPT) complex, composed of three subcomplexes, the GEL complex (composed of RAB5IF/OPTI and TMCO1), the BOS complex (composed of NCLN/Nicalin, NOMO and TMEM147) and the PAT complex (composed of WDR83OS/Asterix and CCDC47). The MPT complex associates with the SEC61 complex. Interacts with CHRM3, CHRM1 and AVPR2. Interacts with LBR; promoting LBR localization to the nucleus inner membrane. Interacts with DHCR7.

The protein resides in the endoplasmic reticulum membrane. It localises to the nucleus membrane. Its subcellular location is the cell membrane. In terms of biological role, component of the multi-pass translocon (MPT) complex that mediates insertion of multi-pass membrane proteins into the lipid bilayer of membranes. The MPT complex takes over after the SEC61 complex: following membrane insertion of the first few transmembrane segments of proteins by the SEC61 complex, the MPT complex occludes the lateral gate of the SEC61 complex to promote insertion of subsequent transmembrane regions. Also acts as a negative regulator of CHRM3 function, most likely by interfering with its trafficking to the cell membrane. Negatively regulates CHRM3-mediated calcium mobilization and activation of RPS6KA1/p90RSK activity. Regulates LBR localization to the nucleus inner membrane. This Homo sapiens (Human) protein is BOS complex subunit TMEM147.